The following is a 286-amino-acid chain: Transmembrane protein 156 (286 aa).

The Cytoplasmic segment spans residues 1-4; that stretch reads MTET. The helical transmembrane segment at 5–25 threads the bilayer; sequence AFLKLFVAIVITFILVLPEFF. Residues 26–214 lie on the Extracellular side of the membrane; sequence KTPKERTLEL…KSVTCSMKIT (189 aa). Asn45, Asn54, Asn76, and Asn142 each carry an N-linked (GlcNAc...) asparagine glycan. Residues 215 to 235 form a helical membrane-spanning segment; sequence WYVLVLFVFMLGIIFIIYKIL. At 236–286 the chain is on the cytoplasmic side; sequence EEHRRVWRRQSHNYKSSSVLFRGHDSGKLSTLNVRVIPGYPWTIWTRDFDE.

The protein localises to the membrane. This Rattus norvegicus (Rat) protein is Transmembrane protein 156 (Tmem156).